A 117-amino-acid polypeptide reads, in one-letter code: Immunoglobulin heavy variable 5-10-1 (117 aa).

A signal peptide spans 1–19; it reads MGSTAILALLLAVLQGVCA. A framework-1 region spans residues 20–44; sequence EVQLVQSGAEVKKPGESLRISCKGS. The Ig-like domain maps to 20–117; it reads EVQLVQSGAE…SDTAMYYCAR (98 aa). Cys-41 and Cys-115 form a disulfide bridge. Residues 45-52 are complementarity-determining-1; that stretch reads GYSFTSYW. A framework-2 region spans residues 53-69; it reads ISWVRQMPGKGLEWMGR. The tract at residues 70 to 77 is complementarity-determining-2; it reads IDPSDSYT. Positions 78-115 are framework-3; sequence NYSPSFQGHVTISADKSISTAYLQWSSLKASDTAMYYC. Residues 116-117 form a complementarity-determining-3 region; that stretch reads AR.

In terms of assembly, immunoglobulins are composed of two identical heavy chains and two identical light chains; disulfide-linked.

It localises to the secreted. The protein localises to the cell membrane. Functionally, v region of the variable domain of immunoglobulin heavy chains that participates in the antigen recognition. Immunoglobulins, also known as antibodies, are membrane-bound or secreted glycoproteins produced by B lymphocytes. In the recognition phase of humoral immunity, the membrane-bound immunoglobulins serve as receptors which, upon binding of a specific antigen, trigger the clonal expansion and differentiation of B lymphocytes into immunoglobulins-secreting plasma cells. Secreted immunoglobulins mediate the effector phase of humoral immunity, which results in the elimination of bound antigens. The antigen binding site is formed by the variable domain of one heavy chain, together with that of its associated light chain. Thus, each immunoglobulin has two antigen binding sites with remarkable affinity for a particular antigen. The variable domains are assembled by a process called V-(D)-J rearrangement and can then be subjected to somatic hypermutations which, after exposure to antigen and selection, allow affinity maturation for a particular antigen. The sequence is that of Immunoglobulin heavy variable 5-10-1 from Homo sapiens (Human).